The sequence spans 530 residues: UPF0422 protein lpl2888 (530 aa).

The signal sequence occupies residues 1-19; it reads MKFKKIILALACLSSPLYA. A coiled-coil region spans residues 20 to 66; it reads DQDQQLKSEIQRLQHQAEDLQAQLNRLQKQLANHKSSQQKHEQQAAT. The segment at 50–81 is disordered; it reads LANHKSSQQKHEQQAATKPAEPQSKPTVKSGA.

Belongs to the UPF0422 family.

The sequence is that of UPF0422 protein lpl2888 from Legionella pneumophila (strain Lens).